We begin with the raw amino-acid sequence, 137 residues long: Large ribosomal subunit protein uL16 (137 aa).

It belongs to the universal ribosomal protein uL16 family. In terms of assembly, part of the 50S ribosomal subunit.

Functionally, binds 23S rRNA and is also seen to make contacts with the A and possibly P site tRNAs. The chain is Large ribosomal subunit protein uL16 from Rhizobium etli (strain CIAT 652).